The sequence spans 268 residues: Ribosomal RNA small subunit methyltransferase A (268 aa).

Residues Asn18, Leu20, Gly45, Glu66, Asp91, and Asn112 each contribute to the S-adenosyl-L-methionine site.

This sequence belongs to the class I-like SAM-binding methyltransferase superfamily. rRNA adenine N(6)-methyltransferase family. RsmA subfamily.

It is found in the cytoplasm. The catalysed reaction is adenosine(1518)/adenosine(1519) in 16S rRNA + 4 S-adenosyl-L-methionine = N(6)-dimethyladenosine(1518)/N(6)-dimethyladenosine(1519) in 16S rRNA + 4 S-adenosyl-L-homocysteine + 4 H(+). Specifically dimethylates two adjacent adenosines (A1518 and A1519) in the loop of a conserved hairpin near the 3'-end of 16S rRNA in the 30S particle. May play a critical role in biogenesis of 30S subunits. This is Ribosomal RNA small subunit methyltransferase A from Shewanella sp. (strain MR-7).